Reading from the N-terminus, the 240-residue chain is MSLLSIAALDLALGGHLVLENVHLTLERGEIVTIVGPNGSGKTTLLKSIIGALTPQRGCIDKSPGMVIGYVPQRLHLDATLPMTVSRLMRLPRRRPTHEIETALDRAGVTQQASSQVSDLSGGQFQRVLLARALLSSPDLLILDEATQGLDQQGMADFYRQIERVRHELGCAVLMVSHELHVVMRASDRVICLNRSICCAGTPERVAASPAYRAMFGLDDEDALALYRHHHSRSSLEMSP.

One can recognise an ABC transporter domain in the interval 1 to 219 (MSLLSIAALD…PAYRAMFGLD (219 aa)). Residue 36–43 (GPNGSGKT) coordinates ATP.

Belongs to the ABC transporter superfamily. Zinc importer (TC 3.A.1.15.5) family. As to quaternary structure, the complex is composed of two ATP-binding proteins (ZnuC), two transmembrane proteins (ZnuB) and a solute-binding protein (ZnuA).

It is found in the cell inner membrane. The catalysed reaction is Zn(2+)(out) + ATP(in) + H2O(in) = Zn(2+)(in) + ADP(in) + phosphate(in) + H(+)(in). Functionally, part of the ABC transporter complex ZnuABC involved in zinc import. Responsible for energy coupling to the transport system. In Chromohalobacter salexigens (strain ATCC BAA-138 / DSM 3043 / CIP 106854 / NCIMB 13768 / 1H11), this protein is Zinc import ATP-binding protein ZnuC.